The primary structure comprises 368 residues: UPF0284 protein PCC8801_3324 (368 aa).

It belongs to the UPF0284 family.

This chain is UPF0284 protein PCC8801_3324, found in Rippkaea orientalis (strain PCC 8801 / RF-1) (Cyanothece sp. (strain PCC 8801)).